Here is a 106-residue protein sequence, read N- to C-terminus: Small ribosomal subunit protein uS10 (106 aa).

The protein belongs to the universal ribosomal protein uS10 family. Part of the 30S ribosomal subunit.

Involved in the binding of tRNA to the ribosomes. This Caldicellulosiruptor bescii (strain ATCC BAA-1888 / DSM 6725 / KCTC 15123 / Z-1320) (Anaerocellum thermophilum) protein is Small ribosomal subunit protein uS10.